The primary structure comprises 84 residues: Dolichol phosphate-mannose biosynthesis regulatory protein (84 aa).

2 helical membrane-spanning segments follow: residues 11 to 31 (FGLV…VILL) and 49 to 69 (YAVL…GLFI).

It belongs to the DPM2 family. As to quaternary structure, component of the dolichol-phosphate mannose (DPM) synthase complex composed of DPM1, DPM2 and DPM3; in the complex interacts directly with DPM3. Component of the glycosylphosphatidylinositol-N-acetylglucosaminyltransferase (GPI-GnT) complex composed at least by PIGA, PIGC, PIGH, PIGP, PIGQ, PIGY and DPM2. Interacts with PIGA, PIGC and PIGQ.

The protein resides in the endoplasmic reticulum membrane. Its pathway is protein modification; protein glycosylation. Regulates the biosynthesis of dolichol phosphate-mannose. Regulatory subunit of the dolichol-phosphate mannose (DPM) synthase complex; essential for the ER localization and stable expression of DPM1. Part of the glycosylphosphatidylinositol-N-acetylglucosaminyltransferase (GPI-GnT) complex that catalyzes the transfer of N-acetylglucosamine from UDP-N-acetylglucosamine to phosphatidylinositol and participates in the first step of GPI biosynthesis. May act by regulating the GPI-GNT complex. In Rattus norvegicus (Rat), this protein is Dolichol phosphate-mannose biosynthesis regulatory protein.